The sequence spans 307 residues: Glycine--tRNA ligase alpha subunit (307 aa).

Belongs to the class-II aminoacyl-tRNA synthetase family. As to quaternary structure, tetramer of two alpha and two beta subunits.

The protein localises to the cytoplasm. The enzyme catalyses tRNA(Gly) + glycine + ATP = glycyl-tRNA(Gly) + AMP + diphosphate. In Aeromonas hydrophila subsp. hydrophila (strain ATCC 7966 / DSM 30187 / BCRC 13018 / CCUG 14551 / JCM 1027 / KCTC 2358 / NCIMB 9240 / NCTC 8049), this protein is Glycine--tRNA ligase alpha subunit.